Here is a 378-residue protein sequence, read N- to C-terminus: UPF0754 membrane protein BC_0879 (378 aa).

The helical transmembrane segment at 357-377 threads the bilayer; sequence YLGALLGGMIGLVQGLLLLFL.

This sequence belongs to the UPF0754 family.

It is found in the cell membrane. This is UPF0754 membrane protein BC_0879 from Bacillus cereus (strain ATCC 14579 / DSM 31 / CCUG 7414 / JCM 2152 / NBRC 15305 / NCIMB 9373 / NCTC 2599 / NRRL B-3711).